A 134-amino-acid chain; its full sequence is Large ribosomal subunit protein eL28 (134 aa).

At serine 60 the chain carries Phosphoserine.

The protein belongs to the eukaryotic ribosomal protein eL28 family. In terms of assembly, component of the large ribosomal subunit (LSU). Mature yeast ribosomes consist of a small (40S) and a large (60S) subunit. The 40S small subunit contains 1 molecule of ribosomal RNA (18S rRNA) and at least 33 different proteins. The large 60S subunit contains 3 rRNA molecules (25S, 5.8S and 5S rRNA) and at least 46 different proteins.

It is found in the cytoplasm. Its function is as follows. Component of the ribosome, a large ribonucleoprotein complex responsible for the synthesis of proteins in the cell. The small ribosomal subunit (SSU) binds messenger RNAs (mRNAs) and translates the encoded message by selecting cognate aminoacyl-transfer RNA (tRNA) molecules. The large subunit (LSU) contains the ribosomal catalytic site termed the peptidyl transferase center (PTC), which catalyzes the formation of peptide bonds, thereby polymerizing the amino acids delivered by tRNAs into a polypeptide chain. The nascent polypeptides leave the ribosome through a tunnel in the LSU and interact with protein factors that function in enzymatic processing, targeting, and the membrane insertion of nascent chains at the exit of the ribosomal tunnel. This chain is Large ribosomal subunit protein eL28 (rpl44), found in Schizosaccharomyces pombe (strain 972 / ATCC 24843) (Fission yeast).